We begin with the raw amino-acid sequence, 253 residues long: Aspartic acid-rich protein (253 aa).

An N-terminal signal peptide occupies residues M1–K22. Residues D211–D253 form a disordered region.

It belongs to the nucleosome assembly protein (NAP) family.

The polypeptide is Aspartic acid-rich protein (Plasmodium falciparum (isolate fcm17 / Senegal)).